The sequence spans 187 residues: Large ribosomal subunit protein uL22A (187 aa).

This sequence belongs to the universal ribosomal protein uL22 family. As to quaternary structure, component of the large ribosomal subunit (LSU). Mature yeast ribosomes consist of a small (40S) and a large (60S) subunit. The 40S small subunit contains 1 molecule of ribosomal RNA (18S rRNA) and at least 33 different proteins. The large 60S subunit contains 3 rRNA molecules (25S, 5.8S and 5S rRNA) and at least 46 different proteins. uL22 is associated with the polypeptide exit tunnel.

It is found in the cytoplasm. Its function is as follows. Component of the ribosome, a large ribonucleoprotein complex responsible for the synthesis of proteins in the cell. The small ribosomal subunit (SSU) binds messenger RNAs (mRNAs) and translates the encoded message by selecting cognate aminoacyl-transfer RNA (tRNA) molecules. The large subunit (LSU) contains the ribosomal catalytic site termed the peptidyl transferase center (PTC), which catalyzes the formation of peptide bonds, thereby polymerizing the amino acids delivered by tRNAs into a polypeptide chain. The nascent polypeptides leave the ribosome through a tunnel in the LSU and interact with protein factors that function in enzymatic processing, targeting, and the membrane insertion of nascent chains at the exit of the ribosomal tunnel. This is Large ribosomal subunit protein uL22A (rpl1701) from Schizosaccharomyces pombe (strain 972 / ATCC 24843) (Fission yeast).